The primary structure comprises 323 residues: tRNA dimethylallyltransferase (323 aa).

An ATP-binding site is contributed by 21 to 28; it reads GPTACNKS. 23–28 is a substrate binding site; that stretch reads TACNKS. 3 interaction with substrate tRNA regions span residues 46–49, 171–175, and 252–257; these read DSAL, QRVLR, and RCVGYR.

This sequence belongs to the IPP transferase family. Monomer. The cofactor is Mg(2+).

It catalyses the reaction adenosine(37) in tRNA + dimethylallyl diphosphate = N(6)-dimethylallyladenosine(37) in tRNA + diphosphate. In terms of biological role, catalyzes the transfer of a dimethylallyl group onto the adenine at position 37 in tRNAs that read codons beginning with uridine, leading to the formation of N6-(dimethylallyl)adenosine (i(6)A). The sequence is that of tRNA dimethylallyltransferase from Buchnera aphidicola subsp. Baizongia pistaciae (strain Bp).